Consider the following 276-residue polypeptide: Putative non-heme chloroperoxidase (276 aa).

In terms of domain architecture, AB hydrolase-1 spans 26 to 263 (PIVLIHGFPL…GGPHAINWTH (238 aa)). Catalysis depends on residues Ser-99, Asp-228, and His-257.

Belongs to the AB hydrolase superfamily. Bacterial non-heme haloperoxidase / perhydrolase family.

The chain is Putative non-heme chloroperoxidase from Synechocystis sp. (strain ATCC 27184 / PCC 6803 / Kazusa).